Here is a 242-residue protein sequence, read N- to C-terminus: UPF0309 protein BAbS19_II03080 (242 aa).

The SIS domain occupies 30–214 (AADLIAAAAR…ARLVGEGDAP (185 aa)).

It belongs to the UPF0309 family.

This chain is UPF0309 protein BAbS19_II03080, found in Brucella abortus (strain S19).